A 154-amino-acid chain; its full sequence is Cyclin-dependent protein kinase inhibitor SMR14 (154 aa).

Positions 1–111 (MSKIKIFHLF…RPPRKPKAIP (111 aa)) are disordered. Over residues 24–37 (SLLVPSKSDSLDSS) the composition is skewed to low complexity. Residues 74-83 (KWECKDEESP) show a composition bias toward basic and acidic residues.

Its function is as follows. Probable cyclin-dependent protein kinase (CDK) inhibitor that functions as a repressor of mitosis in the endoreduplication cell cycle. The protein is Cyclin-dependent protein kinase inhibitor SMR14 of Arabidopsis thaliana (Mouse-ear cress).